Here is a 350-residue protein sequence, read N- to C-terminus: sn-1 oleoyl-lipid 12-desaturase (350 aa).

2 helical membrane-spanning segments follow: residues 41–61 (AWTQ…SLAI) and 64–84 (WFLL…FFVI). The short motif at 86-90 (HDCGH) is the Histidine box-1 element. The helical transmembrane segment at 98–118 (WVNDLVGHIFMMPLIYPFHSW) threads the bilayer. The Histidine box-2 signature appears at 122–126 (HNHHH). The next 2 helical transmembrane spans lie at 196 to 216 (VAVV…TTGI) and 219 to 239 (FVKF…TFTI). The Histidine box-3 motif lies at 287–291 (HHLST).

The protein belongs to the fatty acid desaturase type 2 family. It depends on Fe(2+) as a cofactor.

It localises to the membrane. It carries out the reaction a 1-[(9Z)-octadecenoyl]-2-acyl-glycerolipid + 2 reduced [2Fe-2S]-[ferredoxin] + O2 + 2 H(+) = a 1-[(9Z,12Z)-octadecdienoyl]-2-acyl-glycerolipid + 2 oxidized [2Fe-2S]-[ferredoxin] + 2 H2O. Its pathway is lipid metabolism; polyunsaturated fatty acid biosynthesis. Desaturase involved in fatty acid biosynthesis. Introduces a double bond at carbon 12 of oleoyl groups (18:1) attached to the sn-1 position of the glycerol moiety of membrane glycerolipids. The sequence is that of sn-1 oleoyl-lipid 12-desaturase from Anabaena variabilis.